The primary structure comprises 217 residues: Fucoxanthin-chlorophyll a-c binding protein A, chloroplastic (217 aa).

The transit peptide at 1 to 39 (MKSAVMAVACAAAPGLRRPSAFNGAALTTSAKSSSAMKM) directs the protein to the chloroplast. 3 consecutive transmembrane segments (helical) span residues 81-101 (IAML…PGML), 122-142 (IPPA…LAVM), and 183-203 (GRAA…NNKP).

Belongs to the fucoxanthin chlorophyll protein family. As to quaternary structure, the LHC complex of chromophytic algae is composed of fucoxanthin, chlorophyll A and C bound non-covalently by fucoxanthin chlorophyll proteins (FCPs). The ratio of pigments in this LHC is; fucoxanthin: chlorophyll C: chlorophyll A; (0.6-1): (0.1-0.3): (1).

It is found in the plastid. It localises to the chloroplast thylakoid membrane. Functionally, the light-harvesting complex (LHC) functions as a light receptor, it captures and delivers excitation energy to photosystems with which it is closely associated. Energy is transferred from the carotenoid and chlorophyll C (or B) to chlorophyll A and the photosynthetic reaction centers where it is used to synthesize ATP and reducing power. This Macrocystis pyrifera (Giant kelp) protein is Fucoxanthin-chlorophyll a-c binding protein A, chloroplastic (FCPA).